A 355-amino-acid polypeptide reads, in one-letter code: DNA-binding protein RHL1 (355 aa).

Disordered regions lie at residues 1-26 (MVRASSSKKGGSKGGDKDDAESKQRK), 181-215 (DFQGGAGGAASVKKLASPEIGSQPTETDSPEVDNE), and 229-355 (IQVT…SSKA). A compositionally biased stretch (basic and acidic residues) spans 14–23 (GGDKDDAESK). 2 stretches are compositionally biased toward low complexity: residues 230-246 (QVTPPVQLTPPVQVTPV) and 260-274 (AETSSEASSGESEGN). 2 stretches are compositionally biased toward basic and acidic residues: residues 281-296 (KPLLEPESSTRSREES) and 309-326 (LPEELPAKREKLKSKDSK). A compositionally biased stretch (low complexity) spans 344 to 355 (AGTSKAKSSSKA).

As to quaternary structure, interacts with BIN4 and TOP6A, but not with TOP6B. In terms of tissue distribution, expressed inproliferating and endoreduplicating cells.

Its subcellular location is the nucleus. In terms of biological role, component of the DNA topoisomerase VI complex involved in chromatin organization and progression of endoreduplication cycles. Binds to DNA. Required for endoreduplication beyond 8C. This is DNA-binding protein RHL1 (RHL1) from Arabidopsis thaliana (Mouse-ear cress).